The primary structure comprises 109 residues: uncharacterized protein (109 aa).

2 helical membrane-spanning segments follow: residues 18–38 and 48–68; these read TTLA…LLTL and AGLI…VIAL.

It localises to the cell membrane. This is an uncharacterized protein from Mycobacterium tuberculosis (strain CDC 1551 / Oshkosh).